The following is a 579-amino-acid chain: Protein alan shepard (579 aa).

The span at 1 to 12 (MHPRYSPAPPPQ) shows a compositional bias: pro residues. The tract at residues 1 to 66 (MHPRYSPAPP…GSSSSAAAAP (66 aa)) is disordered. Phosphotyrosine is present on tyrosine 5. A compositionally biased stretch (low complexity) spans 13 to 24 (QQQQMGGPPHQQ). A compositionally biased stretch (gly residues) spans 25-35 (QGGGGGGGGSM). Over residues 37-54 (GPSNAQQLPPQIPRSQNY) the composition is skewed to polar residues. Low complexity predominate over residues 55-66 (SNGSSSSAAAAP). 2 positions are modified to phosphotyrosine: tyrosine 125 and tyrosine 142. A disordered region spans residues 164–225 (PATTTYGQRV…TVQNQNQQGG (62 aa)). Over residues 178–225 (SPSNTNSSSSSNTGSQSGTLSTSLSNTTNTNTNMGPNGTVQNQNQQGG) the composition is skewed to low complexity. RRM domains lie at 231–304 (TNLY…MAKQ) and 310–389 (TNLY…FADG). The disordered stretch occupies residues 553 to 579 (MTDSEQASTAASPDEAYTQYPHQAAPK).

Has a role in the perception of gravity. This Drosophila sechellia (Fruit fly) protein is Protein alan shepard.